We begin with the raw amino-acid sequence, 255 residues long: Type III pantothenate kinase (255 aa).

Position 6-13 (6-13 (DIGNTTSE)) interacts with ATP. Substrate contacts are provided by residues Tyr-100 and 107-110 (GIDR). Asp-109 acts as the Proton acceptor in catalysis. Residue Asp-129 coordinates K(+). Thr-132 serves as a coordination point for ATP. Residue Thr-184 participates in substrate binding.

Belongs to the type III pantothenate kinase family. In terms of assembly, homodimer. It depends on NH4(+) as a cofactor. K(+) is required as a cofactor.

Its subcellular location is the cytoplasm. The enzyme catalyses (R)-pantothenate + ATP = (R)-4'-phosphopantothenate + ADP + H(+). Its pathway is cofactor biosynthesis; coenzyme A biosynthesis; CoA from (R)-pantothenate: step 1/5. Its function is as follows. Catalyzes the phosphorylation of pantothenate (Pan), the first step in CoA biosynthesis. This chain is Type III pantothenate kinase, found in Persephonella marina (strain DSM 14350 / EX-H1).